Reading from the N-terminus, the 349-residue chain is Guanine nucleotide-binding protein alpha-13 subunit (349 aa).

The N-myristoyl glycine moiety is linked to residue glycine 2. Cysteine 3 is lipidated: S-palmitoyl cysteine. The G-alpha domain occupies 35 to 349; the sequence is SHIRLLLLGS…VFKDIMKRKR (315 aa). The interval 38 to 51 is G1 motif; that stretch reads RLLLLGSAESGKTT. GTP contacts are provided by residues 43–50, 177–183, 202–206, 271–274, and alanine 327; these read GSAESGKT, IMAYVPT, DIGGQ, and NEID. Residues 175-183 form a G2 motif region; the sequence is DLIMAYVPT. Threonine 183 contacts Mg(2+). Residues 198–207 are G3 motif; that stretch reads FQLFDIGGQK. A G4 motif region spans residues 267–274; sequence YLFLNEID. A G5 motif region spans residues 325-330; the sequence is CIAIDT.

Belongs to the G-alpha family. In terms of assembly, g proteins are composed of 3 units; alpha, beta and gamma. The alpha chain contains the guanine nucleotide binding site.

Its function is as follows. Guanine nucleotide-binding proteins (G proteins) are involved as modulators or transducers in various transmembrane signaling systems. The polypeptide is Guanine nucleotide-binding protein alpha-13 subunit (Caenorhabditis briggsae).